The chain runs to 31 residues: GIPCGESCVFIPCTITALLGCSCKDKVCYKN.

A cross-link (cyclopeptide (Gly-Asn)) is located at residues 1-31; that stretch reads GIPCGESCVFIPCTITALLGCSCKDKVCYKN. Intrachain disulfides connect Cys-4–Cys-21, Cys-8–Cys-23, and Cys-13–Cys-28.

Contains 3 disulfide bonds. In terms of processing, this is a cyclic peptide. As to expression, expressed in seed but not in root, nodule, flower, stem, shoot, leaf and pod (at protein level).

Probably participates in a plant defense mechanism. This chain is Cliotide T11, found in Clitoria ternatea (Butterfly pea).